The following is a 272-amino-acid chain: Imidazole glycerol phosphate synthase subunit HisF (272 aa).

Active-site residues include aspartate 11 and aspartate 130.

This sequence belongs to the HisA/HisF family. Heterodimer of HisH and HisF.

The protein resides in the cytoplasm. The catalysed reaction is 5-[(5-phospho-1-deoxy-D-ribulos-1-ylimino)methylamino]-1-(5-phospho-beta-D-ribosyl)imidazole-4-carboxamide + L-glutamine = D-erythro-1-(imidazol-4-yl)glycerol 3-phosphate + 5-amino-1-(5-phospho-beta-D-ribosyl)imidazole-4-carboxamide + L-glutamate + H(+). It participates in amino-acid biosynthesis; L-histidine biosynthesis; L-histidine from 5-phospho-alpha-D-ribose 1-diphosphate: step 5/9. In terms of biological role, IGPS catalyzes the conversion of PRFAR and glutamine to IGP, AICAR and glutamate. The HisF subunit catalyzes the cyclization activity that produces IGP and AICAR from PRFAR using the ammonia provided by the HisH subunit. The protein is Imidazole glycerol phosphate synthase subunit HisF of Methanococcus vannielii (strain ATCC 35089 / DSM 1224 / JCM 13029 / OCM 148 / SB).